Here is a 189-residue protein sequence, read N- to C-terminus: Elongation factor P (189 aa).

Residue lysine 34 is modified to N6-(3,6-diaminohexanoyl)-5-hydroxylysine.

It belongs to the elongation factor P family. May be beta-lysylated on the epsilon-amino group of Lys-34 by the combined action of EpmA and EpmB, and then hydroxylated on the C5 position of the same residue by EpmC (if this protein is present). Lysylation is critical for the stimulatory effect of EF-P on peptide-bond formation. The lysylation moiety may extend toward the peptidyltransferase center and stabilize the terminal 3-CCA end of the tRNA. Hydroxylation of the C5 position on Lys-34 may allow additional potential stabilizing hydrogen-bond interactions with the P-tRNA.

Its subcellular location is the cytoplasm. It functions in the pathway protein biosynthesis; polypeptide chain elongation. Involved in peptide bond synthesis. Alleviates ribosome stalling that occurs when 3 or more consecutive Pro residues or the sequence PPG is present in a protein, possibly by augmenting the peptidyl transferase activity of the ribosome. Modification of Lys-34 is required for alleviation. In Buchnera aphidicola subsp. Baizongia pistaciae (strain Bp), this protein is Elongation factor P.